A 385-amino-acid polypeptide reads, in one-letter code: Flavin-dependent monooxygenase (385 aa).

FAD contacts are provided by residues A12 to A15, E34 to N36, Y44 to D47, R105, Y267, D289, and P296 to T302.

It belongs to the aromatic-ring hydroxylase family. FAD is required as a cofactor.

It carries out the reaction 7-chlorotetracycline + NADPH + O2 + H(+) = (1S,10S,10aS)-3-(CONH2)-9-Cl-1-(Me2N)-3,3a,4,10-(HO)4-10-Me-2,5-dioxo-1H,10aH,11H,11aH-cyclopenta[b]anthracen-6-olate + CO + NADP(+) + H2O. It catalyses the reaction a tetracycline + NADPH + O2 + H(+) = a (1S,10aS)-3-(CONH2)-1-(Me2N)-3,3a,4,6-(HO)4-2,5-dioxo-1H,10aH,11H,11aH-cyclopenta[b]anthracene + CO + NADP(+) + H2O. Inhibited by anhydrotetracycline. An FAD-requiring monooxygenase active on tetracycline antibiotic and some of its derivatives, which leads to their inactivation. Expression in E.coli confers high resistance to oxytetracycline, slightly less resistance to tetracycline, moderate resistance to minocycline but no resistance to tigecycline. Degrades tetracycline and oxytetracycline; the reaction requires NADPH. Degrades and confers resistance to chlortetracycline. The polypeptide is Flavin-dependent monooxygenase (Unknown prokaryotic organism).